We begin with the raw amino-acid sequence, 255 residues long: Membrane protein insertase YidC 2 (255 aa).

Residues 1-20 form the signal peptide; it reads MKKKLGLLAMVVALMAITAG. The N-palmitoyl cysteine moiety is linked to residue Cys-21. A lipid anchor (S-diacylglycerol cysteine) is attached at Cys-21. 5 helical membrane passes run 59–79, 129–149, 160–180, 202–222, and 223–243; these read YGLA…PLMI, LAGC…YHAI, FLWF…VAAI, MMLW…PAAL, and SLYW…IKGP.

Belongs to the OXA1/ALB3/YidC family. Type 2 subfamily.

It is found in the cell membrane. Its function is as follows. Required for the insertion and/or proper folding and/or complex formation of integral membrane proteins into the membrane. Involved in integration of membrane proteins that insert both dependently and independently of the Sec translocase complex, as well as at least some lipoproteins. The protein is Membrane protein insertase YidC 2 of Bacillus anthracis.